A 482-amino-acid polypeptide reads, in one-letter code: tRNA sulfurtransferase (482 aa).

Positions 61-165 constitute a THUMP domain; that stretch reads LAIRDALTRI…DDRLLLIKGR (105 aa). ATP contacts are provided by residues 183–184, lysine 265, glycine 287, and glutamine 296; that span reads LI. Cysteine 344 and cysteine 456 are joined by a disulfide. Residues 404–482 enclose the Rhodanese domain; that stretch reads FGPNDVILDI…GFNNVKVYRL (79 aa). Residue cysteine 456 is the Cysteine persulfide intermediate of the active site.

The protein belongs to the ThiI family.

The protein resides in the cytoplasm. The enzyme catalyses [ThiI sulfur-carrier protein]-S-sulfanyl-L-cysteine + a uridine in tRNA + 2 reduced [2Fe-2S]-[ferredoxin] + ATP + H(+) = [ThiI sulfur-carrier protein]-L-cysteine + a 4-thiouridine in tRNA + 2 oxidized [2Fe-2S]-[ferredoxin] + AMP + diphosphate. It carries out the reaction [ThiS sulfur-carrier protein]-C-terminal Gly-Gly-AMP + S-sulfanyl-L-cysteinyl-[cysteine desulfurase] + AH2 = [ThiS sulfur-carrier protein]-C-terminal-Gly-aminoethanethioate + L-cysteinyl-[cysteine desulfurase] + A + AMP + 2 H(+). The protein operates within cofactor biosynthesis; thiamine diphosphate biosynthesis. Its function is as follows. Catalyzes the ATP-dependent transfer of a sulfur to tRNA to produce 4-thiouridine in position 8 of tRNAs, which functions as a near-UV photosensor. Also catalyzes the transfer of sulfur to the sulfur carrier protein ThiS, forming ThiS-thiocarboxylate. This is a step in the synthesis of thiazole, in the thiamine biosynthesis pathway. The sulfur is donated as persulfide by IscS. The protein is tRNA sulfurtransferase of Shigella boydii serotype 18 (strain CDC 3083-94 / BS512).